A 157-amino-acid polypeptide reads, in one-letter code: Ubiquitin-like protein 4A (157 aa).

Residues 1–76 (MILTVKPLQG…LNLVVRPAGE (76 aa)) form the Ubiquitin-like domain.

Component of the bag6/bat3 complex.

Its subcellular location is the cytoplasm. The protein resides in the cytosol. It localises to the nucleus. Functionally, as part of a cytosolic protein quality control complex, the bag6/bat3 complex, maintains misfolded and hydrophobic patches-containing proteins in a soluble state and participates in their proper delivery to the endoplasmic reticulum or alternatively can promote their sorting to the proteasome where they undergo degradation. The bag6/bat3 complex is involved in the post-translational delivery of tail-anchored/type II transmembrane proteins to the endoplasmic reticulum membrane. Similarly, the bag6/bat3 complex also functions as a sorting platform for proteins of the secretory pathway that are mislocalized to the cytosol either delivering them to the proteasome for degradation or to the endoplasmic reticulum. The bag6/bat3 complex also plays a role in the endoplasmic reticulum-associated degradation (ERAD), a quality control mechanism that eliminates unwanted proteins of the endoplasmic reticulum through their retrotranslocation to the cytosol and their targeting to the proteasome. It maintains these retrotranslocated proteins in an unfolded yet soluble state condition in the cytosol to ensure their proper delivery to the proteasome. The polypeptide is Ubiquitin-like protein 4A (ubl4a) (Danio rerio (Zebrafish)).